Consider the following 123-residue polypeptide: uncharacterized protein (123 aa).

Residues 1-28 (MGLGSSKRKEEPPHKSEPKTVGRVKRAG) form a disordered region. A compositionally biased stretch (basic and acidic residues) spans 7–20 (KRKEEPPHKSEPKT).

This sequence belongs to the TUSC2 family.

This is an uncharacterized protein from Caenorhabditis elegans.